We begin with the raw amino-acid sequence, 185 residues long: Ribosome-recycling factor (185 aa).

It belongs to the RRF family.

Its subcellular location is the cytoplasm. In terms of biological role, responsible for the release of ribosomes from messenger RNA at the termination of protein biosynthesis. May increase the efficiency of translation by recycling ribosomes from one round of translation to another. The chain is Ribosome-recycling factor from Streptococcus pneumoniae (strain 70585).